Here is a 591-residue protein sequence, read N- to C-terminus: MGKLLFGKLVFKKSLFLLSGMSSLAVFLTACGATKIFDSSVQLLVSDNFSTLADKSFSQMSYEGIRSFFKKSKGVDLPEADSSQLQEGNGLWKRPGFTLSDRIATFNNIKNDGSDVIVATGFNQQESLQAITSDDIRFQSDKESLAKTGFIFVDGAIEKEFNKRNGVPQFKSTPTNISSVAFRSDDGSFLTGVATAVYLNLNQEYFLDKSGWSTNSSNNNELTVSGFVGIALPSTLSFLNGFRLGIAYFNEVIYKHLSDAQDSSAQVTTSKQTVLKQLQVANGEKRIKKIKWISPKQGSDGETINIQDHQSGSFSDTEPRAITIANNLIDKGVNAIIPIAGPQTNLVVTQIARRQAHTAVIGVDSAQELLDINIDAPNKDKLKMGNKKIIPFSSIKALDVAVESILSTLEKGSSQNGYQGFGYNNIGTVKNNSVGVSEAGYEFLIDPVFWKNTSSMQAMSLSASLKANAASSSDNKKKLSEVATKKNENGSTKNGSNDIIDKYAKLLTKSSSSTSMRNGSSDSNQQNFKTTDNDGDWTIVGDELGKYKSSELPIFTGSSSYPTFQTEAQNVLDGGANVASTQGFKWSFKQI.

A signal peptide spans M1–A30. C31 carries the N-palmitoyl cysteine lipid modification. A lipid anchor (S-diacylglycerol cysteine) is attached at C31. Basic and acidic residues predominate over residues K476 to E488. Disordered stretches follow at residues K476–N497 and S510–G535. Low complexity predominate over residues S510–S523.

This sequence to T.pallidum TmpC.

Its subcellular location is the cell membrane. This is an uncharacterized protein from Mycoplasma genitalium (strain ATCC 33530 / DSM 19775 / NCTC 10195 / G37) (Mycoplasmoides genitalium).